The chain runs to 313 residues: Protoheme IX farnesyltransferase (313 aa).

Helical transmembrane passes span 34–54 (VIEL…RGTV), 56–76 (PLLI…ANTL), 105–125 (HALI…WWTT), 128–148 (LSAH…TLVL), 152–172 (TSQN…IGWS), 173–193 (AVTG…FFWT), 243–263 (LALA…TWFL), and 291–311 (YLAV…PTLF).

This sequence belongs to the UbiA prenyltransferase family. Protoheme IX farnesyltransferase subfamily.

It localises to the cell membrane. It catalyses the reaction heme b + (2E,6E)-farnesyl diphosphate + H2O = Fe(II)-heme o + diphosphate. It participates in porphyrin-containing compound metabolism; heme O biosynthesis; heme O from protoheme: step 1/1. Functionally, converts heme B (protoheme IX) to heme O by substitution of the vinyl group on carbon 2 of heme B porphyrin ring with a hydroxyethyl farnesyl side group. The polypeptide is Protoheme IX farnesyltransferase (Mycolicibacterium vanbaalenii (strain DSM 7251 / JCM 13017 / BCRC 16820 / KCTC 9966 / NRRL B-24157 / PYR-1) (Mycobacterium vanbaalenii)).